The chain runs to 122 residues: MIQPQSYLNVADNSGARKLMCIRVLGSSNRKYAHIGDMVIAVVKETVPNMPLKKSEIVRAVIVRTRKGLKRDNGMVLRFDDNAAVVINQEGNPRGTRVFGPVARELRDLNFTKIVSLAPEVL.

The protein belongs to the universal ribosomal protein uL14 family. Part of the 50S ribosomal subunit.

Its subcellular location is the plastid. The protein resides in the chloroplast. Binds to 23S rRNA. The protein is Large ribosomal subunit protein uL14c of Zygnema circumcarinatum (Green alga).